The primary structure comprises 500 residues: Aspartyl/glutamyl-tRNA(Asn/Gln) amidotransferase subunit B (500 aa).

This sequence belongs to the GatB/GatE family. GatB subfamily. As to quaternary structure, heterotrimer of A, B and C subunits.

It catalyses the reaction L-glutamyl-tRNA(Gln) + L-glutamine + ATP + H2O = L-glutaminyl-tRNA(Gln) + L-glutamate + ADP + phosphate + H(+). The catalysed reaction is L-aspartyl-tRNA(Asn) + L-glutamine + ATP + H2O = L-asparaginyl-tRNA(Asn) + L-glutamate + ADP + phosphate + 2 H(+). Its function is as follows. Allows the formation of correctly charged Asn-tRNA(Asn) or Gln-tRNA(Gln) through the transamidation of misacylated Asp-tRNA(Asn) or Glu-tRNA(Gln) in organisms which lack either or both of asparaginyl-tRNA or glutaminyl-tRNA synthetases. The reaction takes place in the presence of glutamine and ATP through an activated phospho-Asp-tRNA(Asn) or phospho-Glu-tRNA(Gln). This is Aspartyl/glutamyl-tRNA(Asn/Gln) amidotransferase subunit B from Rhizobium johnstonii (strain DSM 114642 / LMG 32736 / 3841) (Rhizobium leguminosarum bv. viciae).